Reading from the N-terminus, the 338-residue chain is Flap endonuclease 1 (338 aa).

The interval 1–98 (MGTDIGDLLL…DTLAKRHEVR (98 aa)) is N-domain. Mg(2+) is bound by residues D27, D80, E152, E154, D173, D175, and D236. The I-domain stretch occupies residues 116–257 (EAYKYAQASS…RALKLVKEHG (142 aa)). Residues 330 to 338 (SQSTLDQWF) form an interaction with PCNA region.

This sequence belongs to the XPG/RAD2 endonuclease family. FEN1 subfamily. Interacts with PCNA. PCNA stimulates the nuclease activity without altering cleavage specificity. Mg(2+) serves as cofactor.

Structure-specific nuclease with 5'-flap endonuclease and 5'-3' exonuclease activities involved in DNA replication and repair. During DNA replication, cleaves the 5'-overhanging flap structure that is generated by displacement synthesis when DNA polymerase encounters the 5'-end of a downstream Okazaki fragment. Binds the unpaired 3'-DNA end and kinks the DNA to facilitate 5' cleavage specificity. Cleaves one nucleotide into the double-stranded DNA from the junction in flap DNA, leaving a nick for ligation. Also involved in the base excision repair (BER) pathway. Acts as a genome stabilization factor that prevents flaps from equilibrating into structures that lead to duplications and deletions. Also possesses 5'-3' exonuclease activity on nicked or gapped double-stranded DNA. The sequence is that of Flap endonuclease 1 from Methanococcoides burtonii (strain DSM 6242 / NBRC 107633 / OCM 468 / ACE-M).